Consider the following 489-residue polypeptide: Glycogen synthase (489 aa).

An ADP-alpha-D-glucose-binding site is contributed by Lys-15.

Belongs to the glycosyltransferase 1 family. Bacterial/plant glycogen synthase subfamily.

It catalyses the reaction [(1-&gt;4)-alpha-D-glucosyl](n) + ADP-alpha-D-glucose = [(1-&gt;4)-alpha-D-glucosyl](n+1) + ADP + H(+). The protein operates within glycan biosynthesis; glycogen biosynthesis. Synthesizes alpha-1,4-glucan chains using ADP-glucose. The polypeptide is Glycogen synthase (Francisella tularensis subsp. mediasiatica (strain FSC147)).